Consider the following 754-residue polypeptide: 5-methyltetrahydropteroyltriglutamate--homocysteine methyltransferase (754 aa).

5-methyltetrahydropteroyltri-L-glutamate-binding positions include 15–18 (RELK) and Lys-114. L-homocysteine contacts are provided by residues 430-432 (IGS) and Glu-483. L-methionine-binding positions include 430 to 432 (IGS) and Glu-483. Residues 514 to 515 (RC) and Trp-560 each bind 5-methyltetrahydropteroyltri-L-glutamate. Asp-598 provides a ligand contact to L-homocysteine. Residue Asp-598 coordinates L-methionine. Residue Glu-604 participates in 5-methyltetrahydropteroyltri-L-glutamate binding. His-641, Cys-643, and Glu-665 together coordinate Zn(2+). His-694 serves as the catalytic Proton donor. Zn(2+) is bound at residue Cys-726.

It belongs to the vitamin-B12 independent methionine synthase family. Zn(2+) is required as a cofactor.

It catalyses the reaction 5-methyltetrahydropteroyltri-L-glutamate + L-homocysteine = tetrahydropteroyltri-L-glutamate + L-methionine. The protein operates within amino-acid biosynthesis; L-methionine biosynthesis via de novo pathway; L-methionine from L-homocysteine (MetE route): step 1/1. In terms of biological role, catalyzes the transfer of a methyl group from 5-methyltetrahydrofolate to homocysteine resulting in methionine formation. This Campylobacter jejuni subsp. jejuni serotype O:6 (strain 81116 / NCTC 11828) protein is 5-methyltetrahydropteroyltriglutamate--homocysteine methyltransferase.